A 179-amino-acid chain; its full sequence is MAQLSGTPDVPDMGRRQFMNLLTFGSATGVALGMLYPVVRYFIPPASGGVGGGVVAKDALGNDISVSDFLAKHPANDRALAQGLKGDPTYIVVQDDHTIGDYGLNAVCTHLGCVVPWNISENKFICPCHGSQYDNTGKVVRGPAPLSLALAHAAVSDDKITFTPWTETDFRTGKEPWWT.

The helical transmembrane segment at L21 to I43 threads the bilayer. Residues G61 to F162 form the Rieske domain. [2Fe-2S] cluster contacts are provided by C108, H110, C126, and H129. A disulfide bridge links C113 with C128.

It belongs to the Rieske iron-sulfur protein family. In terms of assembly, the 4 large subunits of the cytochrome b6-f complex are cytochrome b6, subunit IV (17 kDa polypeptide, PetD), cytochrome f and the Rieske protein, while the 4 small subunits are PetG, PetL, PetM and PetN. The complex functions as a dimer. [2Fe-2S] cluster is required as a cofactor.

It is found in the cellular thylakoid membrane. The enzyme catalyses 2 oxidized [plastocyanin] + a plastoquinol + 2 H(+)(in) = 2 reduced [plastocyanin] + a plastoquinone + 4 H(+)(out). Functionally, component of the cytochrome b6-f complex, which mediates electron transfer between photosystem II (PSII) and photosystem I (PSI), cyclic electron flow around PSI, and state transitions. The protein is Cytochrome b6-f complex iron-sulfur subunit of Cyanothece sp. (strain PCC 7425 / ATCC 29141).